The primary structure comprises 77 residues: Secapin (77 aa).

Positions 1–32 (MKNYSKNATHLITVLLFSFVVILLIIPSKCEA) are cleaved as a signal peptide. A propeptide spanning residues 33–52 (VSNDMQPLEARSADLIPEPR) is cleaved from the precursor. Cys61 and Cys72 are joined by a disulfide.

This sequence belongs to the secapin family. Expressed by the venom gland.

It is found in the secreted. Its function is as follows. Nontoxic peptide. This Vespa velutina nigrithorax (Hornet) protein is Secapin.